The primary structure comprises 73 residues: YFSYNDKVIKILEAEYLNTIHHVTAGTVISDKLEIACGSGILQVKKLQQESKKALNVEEFLRGTNILKATILK.

This sequence belongs to the Fmt family.

It carries out the reaction L-methionyl-tRNA(fMet) + (6R)-10-formyltetrahydrofolate = N-formyl-L-methionyl-tRNA(fMet) + (6S)-5,6,7,8-tetrahydrofolate + H(+). Its function is as follows. Attaches a formyl group to the free amino group of methionyl-tRNA(fMet). The formyl group appears to play a dual role in the initiator identity of N-formylmethionyl-tRNA by promoting its recognition by IF2 and preventing the misappropriation of this tRNA by the elongation apparatus. This Rickettsia akari protein is Methionyl-tRNA formyltransferase (fmt).